Consider the following 140-residue polypeptide: ATP synthase epsilon chain (140 aa).

Belongs to the ATPase epsilon chain family. F-type ATPases have 2 components, CF(1) - the catalytic core - and CF(0) - the membrane proton channel. CF(1) has five subunits: alpha(3), beta(3), gamma(1), delta(1), epsilon(1). CF(0) has three main subunits: a, b and c.

Its subcellular location is the cell inner membrane. Produces ATP from ADP in the presence of a proton gradient across the membrane. This is ATP synthase epsilon chain from Saccharophagus degradans (strain 2-40 / ATCC 43961 / DSM 17024).